A 185-amino-acid chain; its full sequence is MKGSLYSSKIAEPYAQALIGLAQQQNLTEVFGDNLRSLLTLLQDSPDLSAVLSSPVVKDEDKKSVLRSVLGDGGNGYLLNFLMLLVDKRRIVFLEAICEQYLALLRQFTNTVLAEVTSALKLTDAQKDQVKERVKQLTGAQAVELETKVDGDILGGIVIKVGSQVFDSSLRGQLRRVGLSLGTAL.

This sequence belongs to the ATPase delta chain family. In terms of assembly, F-type ATPases have 2 components, F(1) - the catalytic core - and F(0) - the membrane proton channel. F(1) has five subunits: alpha(3), beta(3), gamma(1), delta(1), epsilon(1). CF(0) has four main subunits: a(1), b(1), b'(1) and c(10-14). The alpha and beta chains form an alternating ring which encloses part of the gamma chain. F(1) is attached to F(0) by a central stalk formed by the gamma and epsilon chains, while a peripheral stalk is formed by the delta, b and b' chains.

The protein localises to the cellular thylakoid membrane. F(1)F(0) ATP synthase produces ATP from ADP in the presence of a proton or sodium gradient. F-type ATPases consist of two structural domains, F(1) containing the extramembraneous catalytic core and F(0) containing the membrane proton channel, linked together by a central stalk and a peripheral stalk. During catalysis, ATP synthesis in the catalytic domain of F(1) is coupled via a rotary mechanism of the central stalk subunits to proton translocation. Functionally, this protein is part of the stalk that links CF(0) to CF(1). It either transmits conformational changes from CF(0) to CF(1) or is implicated in proton conduction. The polypeptide is ATP synthase subunit delta (Synechocystis sp. (strain ATCC 27184 / PCC 6803 / Kazusa)).